Here is a 316-residue protein sequence, read N- to C-terminus: DNA-directed RNA polymerase subunit alpha (316 aa).

The alpha N-terminal domain (alpha-NTD) stretch occupies residues 1–232 (MSGNDLFPST…DLFNPLHHCS (232 aa)). The tract at residues 247 to 316 (KINDILVEEL…LNIYLPKEKY (70 aa)) is alpha C-terminal domain (alpha-CTD).

This sequence belongs to the RNA polymerase alpha chain family. As to quaternary structure, in plastids the minimal PEP RNA polymerase catalytic core is composed of four subunits: alpha, beta, beta', and beta''. When a (nuclear-encoded) sigma factor is associated with the core the holoenzyme is formed, which can initiate transcription.

It localises to the plastid. It is found in the chloroplast. The enzyme catalyses RNA(n) + a ribonucleoside 5'-triphosphate = RNA(n+1) + diphosphate. DNA-dependent RNA polymerase catalyzes the transcription of DNA into RNA using the four ribonucleoside triphosphates as substrates. In Mesostigma viride (Green alga), this protein is DNA-directed RNA polymerase subunit alpha.